We begin with the raw amino-acid sequence, 168 residues long: Cyclic pyranopterin monophosphate synthase (168 aa).

Substrate is bound by residues 81 to 83 and 117 to 118; these read LCH and ME. Aspartate 132 is a catalytic residue.

It belongs to the MoaC family. Homohexamer; trimer of dimers.

It carries out the reaction (8S)-3',8-cyclo-7,8-dihydroguanosine 5'-triphosphate = cyclic pyranopterin phosphate + diphosphate. It functions in the pathway cofactor biosynthesis; molybdopterin biosynthesis. Its function is as follows. Catalyzes the conversion of (8S)-3',8-cyclo-7,8-dihydroguanosine 5'-triphosphate to cyclic pyranopterin monophosphate (cPMP). This is Cyclic pyranopterin monophosphate synthase from Deinococcus radiodurans (strain ATCC 13939 / DSM 20539 / JCM 16871 / CCUG 27074 / LMG 4051 / NBRC 15346 / NCIMB 9279 / VKM B-1422 / R1).